We begin with the raw amino-acid sequence, 260 residues long: Taurine import ATP-binding protein TauB (260 aa).

Residues 6 to 235 form the ABC transporter domain; the sequence is AHQVSVVYAS…RYAAGESMRS (230 aa). 40 to 47 is an ATP binding site; the sequence is GASGCGKS.

The protein belongs to the ABC transporter superfamily. Taurine importer (TC 3.A.1.17.1) family. In terms of assembly, the complex is composed of two ATP-binding proteins (TauB), two transmembrane proteins (TauC) and a solute-binding protein (TauA).

It localises to the cell inner membrane. The catalysed reaction is taurine(out) + ATP + H2O = taurine(in) + ADP + phosphate + H(+). Part of the ABC transporter complex TauABC involved in taurine import. Responsible for energy coupling to the transport system. The chain is Taurine import ATP-binding protein TauB from Burkholderia thailandensis (strain ATCC 700388 / DSM 13276 / CCUG 48851 / CIP 106301 / E264).